The following is a 96-amino-acid chain: Co-chaperonin GroES (96 aa).

It belongs to the GroES chaperonin family. In terms of assembly, heptamer of 7 subunits arranged in a ring. Interacts with the chaperonin GroEL.

The protein resides in the cytoplasm. Functionally, together with the chaperonin GroEL, plays an essential role in assisting protein folding. The GroEL-GroES system forms a nano-cage that allows encapsulation of the non-native substrate proteins and provides a physical environment optimized to promote and accelerate protein folding. GroES binds to the apical surface of the GroEL ring, thereby capping the opening of the GroEL channel. The protein is Co-chaperonin GroES of Shewanella pealeana (strain ATCC 700345 / ANG-SQ1).